The chain runs to 486 residues: Keratin, type II cuticular Hb6 (486 aa).

The tract at residues Met1–Glu106 is head. The IF rod domain occupies Glu106–Leu417. Residues Lys107–Tyr141 form a coil 1A region. The tract at residues Gln142 to Met151 is linker 1. The coil 1B stretch occupies residues Glu152–Ser252. A Glycyl lysine isopeptide (Lys-Gly) (interchain with G-Cter in SUMO1) cross-link involves residue Lys212. The interval His253–Leu269 is linker 12. Residues Asn270–Glu413 form a coil 2 region. Residues Glu414 to Cys486 form a tail region.

It belongs to the intermediate filament family. In terms of assembly, heterotetramer of two type I and two type II keratins.

In Mus musculus (Mouse), this protein is Keratin, type II cuticular Hb6 (Krt86).